Reading from the N-terminus, the 100-residue chain is uncharacterized protein (100 aa).

An N-terminal signal peptide occupies residues 1–23 (MKYVALAFVLSLVILQISAQVGA).

As to expression, nacreous layer of shell (at protein level). Expressed primarily in the mantle with highest level in the mantle pallium and lower level in the mantle edge.

It localises to the secreted. This is an uncharacterized protein from Margaritifera margaritifera (Freshwater pearl mussel).